We begin with the raw amino-acid sequence, 360 residues long: S-adenosylmethionine:tRNA ribosyltransferase-isomerase (360 aa).

Belongs to the QueA family. In terms of assembly, monomer.

Its subcellular location is the cytoplasm. The catalysed reaction is 7-aminomethyl-7-carbaguanosine(34) in tRNA + S-adenosyl-L-methionine = epoxyqueuosine(34) in tRNA + adenine + L-methionine + 2 H(+). It functions in the pathway tRNA modification; tRNA-queuosine biosynthesis. Its function is as follows. Transfers and isomerizes the ribose moiety from AdoMet to the 7-aminomethyl group of 7-deazaguanine (preQ1-tRNA) to give epoxyqueuosine (oQ-tRNA). This Burkholderia pseudomallei (strain 1106a) protein is S-adenosylmethionine:tRNA ribosyltransferase-isomerase.